A 333-amino-acid chain; its full sequence is Holliday junction branch migration complex subunit RuvB (333 aa).

Residues 1–182 (MDERLLSGES…FGVLSRLEYY (182 aa)) form a large ATPase domain (RuvB-L) region. ATP contacts are provided by residues Leu-21, Arg-22, Gly-63, Lys-66, Thr-67, Thr-68, 129–131 (EDF), Arg-172, Tyr-182, and Arg-219. Residue Thr-67 coordinates Mg(2+). The interval 183-253 (TVDQLSAIVE…ITQMALELLQ (71 aa)) is small ATPAse domain (RuvB-S). Residues 256-333 (KLGLDHIDHK…EHFGMEMPKV (78 aa)) are head domain (RuvB-H). The DNA site is built by Arg-311 and Arg-316.

This sequence belongs to the RuvB family. As to quaternary structure, homohexamer. Forms an RuvA(8)-RuvB(12)-Holliday junction (HJ) complex. HJ DNA is sandwiched between 2 RuvA tetramers; dsDNA enters through RuvA and exits via RuvB. An RuvB hexamer assembles on each DNA strand where it exits the tetramer. Each RuvB hexamer is contacted by two RuvA subunits (via domain III) on 2 adjacent RuvB subunits; this complex drives branch migration. In the full resolvosome a probable DNA-RuvA(4)-RuvB(12)-RuvC(2) complex forms which resolves the HJ.

It is found in the cytoplasm. The catalysed reaction is ATP + H2O = ADP + phosphate + H(+). The RuvA-RuvB-RuvC complex processes Holliday junction (HJ) DNA during genetic recombination and DNA repair, while the RuvA-RuvB complex plays an important role in the rescue of blocked DNA replication forks via replication fork reversal (RFR). RuvA specifically binds to HJ cruciform DNA, conferring on it an open structure. The RuvB hexamer acts as an ATP-dependent pump, pulling dsDNA into and through the RuvAB complex. RuvB forms 2 homohexamers on either side of HJ DNA bound by 1 or 2 RuvA tetramers; 4 subunits per hexamer contact DNA at a time. Coordinated motions by a converter formed by DNA-disengaged RuvB subunits stimulates ATP hydrolysis and nucleotide exchange. Immobilization of the converter enables RuvB to convert the ATP-contained energy into a lever motion, pulling 2 nucleotides of DNA out of the RuvA tetramer per ATP hydrolyzed, thus driving DNA branch migration. The RuvB motors rotate together with the DNA substrate, which together with the progressing nucleotide cycle form the mechanistic basis for DNA recombination by continuous HJ branch migration. Branch migration allows RuvC to scan DNA until it finds its consensus sequence, where it cleaves and resolves cruciform DNA. This Bacillus anthracis (strain A0248) protein is Holliday junction branch migration complex subunit RuvB.